Consider the following 430-residue polypeptide: tRNA(Ile)-lysidine synthase (430 aa).

21–26 (SGGLDS) contributes to the ATP binding site.

The protein belongs to the tRNA(Ile)-lysidine synthase family.

The protein resides in the cytoplasm. It catalyses the reaction cytidine(34) in tRNA(Ile2) + L-lysine + ATP = lysidine(34) in tRNA(Ile2) + AMP + diphosphate + H(+). Functionally, ligates lysine onto the cytidine present at position 34 of the AUA codon-specific tRNA(Ile) that contains the anticodon CAU, in an ATP-dependent manner. Cytidine is converted to lysidine, thus changing the amino acid specificity of the tRNA from methionine to isoleucine. The protein is tRNA(Ile)-lysidine synthase of Salmonella schwarzengrund (strain CVM19633).